The primary structure comprises 90 residues: Probable Fe(2+)-trafficking protein (90 aa).

It belongs to the Fe(2+)-trafficking protein family.

In terms of biological role, could be a mediator in iron transactions between iron acquisition and iron-requiring processes, such as synthesis and/or repair of Fe-S clusters in biosynthetic enzymes. This chain is Probable Fe(2+)-trafficking protein, found in Stutzerimonas stutzeri (strain A1501) (Pseudomonas stutzeri).